A 156-amino-acid chain; its full sequence is Protein-export protein SecB (156 aa).

Belongs to the SecB family. Homotetramer, a dimer of dimers. One homotetramer interacts with 1 SecA dimer.

The protein resides in the cytoplasm. Its function is as follows. One of the proteins required for the normal export of preproteins out of the cell cytoplasm. It is a molecular chaperone that binds to a subset of precursor proteins, maintaining them in a translocation-competent state. It also specifically binds to its receptor SecA. In Aeromonas hydrophila subsp. hydrophila (strain ATCC 7966 / DSM 30187 / BCRC 13018 / CCUG 14551 / JCM 1027 / KCTC 2358 / NCIMB 9240 / NCTC 8049), this protein is Protein-export protein SecB.